Reading from the N-terminus, the 330-residue chain is Putative quinone oxidoreductase YhfP (330 aa).

NADP(+)-binding positions include Tyr45, 160–163, 182–184, Arg202, Leu248, Ile262, Ser273, and Asn320; these read TGGV and TGN.

This sequence belongs to the zinc-containing alcohol dehydrogenase family. Quinone oxidoreductase subfamily. In terms of assembly, homodimer, or homotetramer.

The protein resides in the cytoplasm. The polypeptide is Putative quinone oxidoreductase YhfP (yhfP) (Bacillus subtilis (strain 168)).